Reading from the N-terminus, the 169-residue chain is Unfolded protein response-inducible protein 1 (169 aa).

Functionally, involved in the unfolded protein response (UPR), a transcriptional response which up-regulates genes that enable cells to cope with misfolded, endoplasmic reticulum-retained proteins. UPR is part of the endoplasmic reticulum quality control (ERQC) which prevents the exit of misfolded secretory and membrane proteins from the endoplasmic reticulum. The polypeptide is Unfolded protein response-inducible protein 1 (ULI1) (Saccharomyces cerevisiae (strain ATCC 204508 / S288c) (Baker's yeast)).